The chain runs to 706 residues: Polyribonucleotide nucleotidyltransferase (706 aa).

Residues Asp-487 and Asp-493 each contribute to the Mg(2+) site. Residues 554–613 (PRIHTMKISSDKIKDVIGKGGAVIRALCEETGTTIEIEDDGTIKIAATEGAAAKEAIRRI) form the KH domain. An S1 motif domain is found at 623–691 (GRIYQGKVAR…RQGRVRLSMK (69 aa)).

The protein belongs to the polyribonucleotide nucleotidyltransferase family. In terms of assembly, component of the RNA degradosome, which is a multiprotein complex involved in RNA processing and mRNA degradation. Mg(2+) is required as a cofactor.

Its subcellular location is the cytoplasm. It carries out the reaction RNA(n+1) + phosphate = RNA(n) + a ribonucleoside 5'-diphosphate. In terms of biological role, involved in mRNA degradation. Catalyzes the phosphorolysis of single-stranded polyribonucleotides processively in the 3'- to 5'-direction. The protein is Polyribonucleotide nucleotidyltransferase of Vibrio atlanticus (strain LGP32) (Vibrio splendidus (strain Mel32)).